The primary structure comprises 199 residues: Extracellular superoxide dismutase [Cu-Zn] (199 aa).

The signal sequence occupies residues 1–20 (MMIASFAIFLSHIIFITYAT). 3 N-linked (GlcNAc...) asparagine glycosylation sites follow: Asn-33, Asn-60, and Asn-70. Cu cation-binding residues include His-89, His-91, and His-106. Cys-100 and Cys-192 are disulfide-bonded. His-106 is a binding site for Zn(2+). N-linked (GlcNAc...) asparagine glycosylation is present at Asn-111. Zn(2+) contacts are provided by His-114, His-123, and Asp-126. Residue His-163 participates in Cu cation binding.

The protein belongs to the Cu-Zn superoxide dismutase family. In terms of assembly, homodimer. It depends on Cu cation as a cofactor. The cofactor is Zn(2+).

Its subcellular location is the secreted. It localises to the extracellular space. The enzyme catalyses 2 superoxide + 2 H(+) = H2O2 + O2. Protect the extracellular space from toxic effect of reactive oxygen intermediates by converting superoxide radicals into hydrogen peroxide and oxygen. May act in the parasite defense by neutralizing superoxide generated by activated leukocytes, thus acting as both an antioxidant and an anti-inflammatory factor. The polypeptide is Extracellular superoxide dismutase [Cu-Zn] (Brugia pahangi (Filarial nematode worm)).